A 161-amino-acid polypeptide reads, in one-letter code: Probable ubiquitin-conjugating enzyme E2 16 (161 aa).

The region spanning 15–161 (IATNRLQKEL…TRWWFHDDKV (147 aa)) is the UBC core domain. The Glycyl thioester intermediate role is filled by cysteine 99.

Belongs to the ubiquitin-conjugating enzyme family.

It carries out the reaction S-ubiquitinyl-[E1 ubiquitin-activating enzyme]-L-cysteine + [E2 ubiquitin-conjugating enzyme]-L-cysteine = [E1 ubiquitin-activating enzyme]-L-cysteine + S-ubiquitinyl-[E2 ubiquitin-conjugating enzyme]-L-cysteine.. Its pathway is protein modification; protein ubiquitination. In terms of biological role, accepts the ubiquitin from the E1 complex and catalyzes its covalent attachment to other proteins. The sequence is that of Probable ubiquitin-conjugating enzyme E2 16 (UBC16) from Arabidopsis thaliana (Mouse-ear cress).